The following is a 131-amino-acid chain: Small ribosomal subunit protein uS11 (131 aa).

This sequence belongs to the universal ribosomal protein uS11 family. In terms of assembly, part of the 30S ribosomal subunit. Interacts with proteins S7 and S18. Binds to IF-3.

Functionally, located on the platform of the 30S subunit, it bridges several disparate RNA helices of the 16S rRNA. Forms part of the Shine-Dalgarno cleft in the 70S ribosome. This is Small ribosomal subunit protein uS11 from Exiguobacterium sp. (strain ATCC BAA-1283 / AT1b).